Consider the following 1313-residue polypeptide: Angiotensin-converting enzyme (1313 aa).

Positions 1–35 (MGAASGQRGRWPLSPPLLMLSLLLLLLLPPSPAPA) are cleaved as a signal peptide. Residues 36–1265 (LDPGLQPGNF…LEPQQARVGQ (1230 aa)) lie on the Extracellular side of the membrane. 6 N-linked (GlcNAc...) asparagine glycosylation sites follow: Asn44, Asn60, Asn80, Asn117, Asn152, and Asn166. Peptidase M2 domains follow at residues 46 to 630 (SADE…LGWP) and 649 to 1228 (ETDE…LGWP). A disulfide bridge links Cys163 with Cys171. Tyr237 contributes to the chloride binding site. N-linked (GlcNAc...) asparagine glycosylation is present at Asn324. Residues Cys365 and Cys383 are joined by a disulfide bond. His396 serves as a coordination point for Zn(2+). The active-site Proton acceptor 1 is Glu397. Zn(2+) is bound by residues His400 and Glu424. N-linked (GlcNAc...) asparagine glycosylation is present at Asn515. His526 functions as the Proton donor 1 in the catalytic mechanism. Chloride is bound at residue Arg535. A disulfide bond links Cys551 and Cys563. 4 N-linked (GlcNAc...) asparagine glycosylation sites follow: Asn683, Asn701, Asn720, and Asn766. An intrachain disulfide couples Cys763 to Cys769. Chloride is bound by residues Arg797 and Tyr835. N-linked (GlcNAc...) asparagine glycosylation is present at Asn948. Cys963 and Cys981 form a disulfide bridge. Residue His994 participates in Zn(2+) binding. The Proton acceptor 2 role is filled by Glu995. The Zn(2+) site is built by His998 and Glu1022. Positions 1096 and 1100 each coordinate chloride. The active-site Proton donor 2 is the His1124. Arg1133 is a binding site for chloride. Cys1149 and Cys1161 are disulfide-bonded. Residue Asn1197 is glycosylated (N-linked (GlcNAc...) asparagine). The segment at 1221–1262 (HGETLGWPEYTWTPNTARAEGSLPESSRVNFLGMYLEPQQAR) is juxtamembrane stalk. The chain crosses the membrane as a helical span at residues 1266 to 1282 (WVLLFLGVALLVATVGL). At 1283-1313 (AHRLYNIHNHHSLRRPHRGPQFGSEVELRHS) the chain is on the cytoplasmic side. Phosphoserine is present on Ser1306.

Belongs to the peptidase M2 family. As to quaternary structure, monomer and homodimer; homodimerizes following binding to an inhibitor. Interacts with calmodulin (CALM1, CALM2 or CALM3); interaction takes place in the cytoplasmic region and regulates phosphorylation and proteolytic cleavage. It depends on Zn(2+) as a cofactor. The cofactor is chloride. Produced following proteolytic cleavage by secretase enzymes that cleave the transmembrane form in the juxtamembrane stalk region upstream of the transmembrane region. Cleavage can take place at different sites of the juxtamembrane stalk region. Post-translationally, phosphorylated by CK2 on Ser-1306; which allows membrane retention. Phosphorylated on tyrosine residues on its extracellular part, promoting cleavage by secretase enzymes and formation of the soluble form (Angiotensin-converting enzyme, soluble form). Expressed in brain, kidney, lung, skeletal muscle and heart. As to expression, testis-specific isoform is expressed in spermatocytes, adult testis.

Its subcellular location is the cell membrane. It is found in the cytoplasm. The protein resides in the secreted. The enzyme catalyses Release of a C-terminal dipeptide, oligopeptide-|-Xaa-Yaa, when Xaa is not Pro, and Yaa is neither Asp nor Glu. Thus, conversion of angiotensin I to angiotensin II, with increase in vasoconstrictor activity, but no action on angiotensin II.. It carries out the reaction angiotensin I + H2O = L-histidyl-L-leucine + angiotensin II. The catalysed reaction is bradykinin + H2O = L-Phe-L-Arg + bradykinin(1-7). It catalyses the reaction substance P + H2O = substance P(1-9) + L-Leu-L-Met-NH2. The enzyme catalyses substance P + H2O = substance P(1-8) + Gly-L-Leu-L-Met-NH2. It carries out the reaction substance P + H2O = L-Phe-L-Phe-Gly-L-Leu-L-Met-NH2 + substance P(1-6). The catalysed reaction is neurotensin + H2O = neurotensin(1-11) + L-isoleucyl-L-leucine. It catalyses the reaction goralatide + H2O = N-acetyl-L-seryl-L-aspartate + L-lysyl-L-proline. The enzyme catalyses Met-enkephalin + H2O = L-phenylalanyl-L-methionine + L-tyrosylglycylglycine. It carries out the reaction Leu-enkephalin + H2O = L-tyrosylglycylglycine + L-phenylalanyl-L-leucine. The catalysed reaction is Met-enkephalin-Arg-Phe + H2O = L-arginyl-L-phenylalanine + Met-enkephalin. Its activity is regulated as follows. The dipeptidyl carboxypeptidase activity is strongly activated by chloride. The dipeptidyl carboxypeptidase activity is specifically inhibited by lisinopril, captopril and enalaprilat. Strongly inhibited by lisinopril and captopril. Dipeptidyl carboxypeptidase that removes dipeptides from the C-terminus of a variety of circulating hormones, such as angiotensin I, bradykinin or enkephalins, thereby playing a key role in the regulation of blood pressure, electrolyte homeostasis or synaptic plasticity. Composed of two similar catalytic domains, each possessing a functional active site, with different selectivity for substrates. Plays a major role in the angiotensin-renin system that regulates blood pressure and sodium retention by the kidney by converting angiotensin I to angiotensin II, resulting in an increase of the vasoconstrictor activity of angiotensin. Also able to inactivate bradykinin, a potent vasodilator, and therefore enhance the blood pressure response. Acts as a regulator of synaptic transmission by mediating cleavage of neuropeptide hormones, such as substance P, neurotensin or enkephalins. Catalyzes degradation of different enkephalin neuropeptides (Met-enkephalin, Leu-enkephalin, Met-enkephalin-Arg-Phe and possibly Met-enkephalin-Arg-Gly-Leu). Acts as a regulator of synaptic plasticity in the nucleus accumbens of the brain by mediating cleavage of Met-enkephalin-Arg-Phe, a strong ligand of Mu-type opioid receptor OPRM1, into Met-enkephalin. Met-enkephalin-Arg-Phe cleavage by ACE decreases activation of OPRM1, leading to long-term synaptic potentiation of glutamate release. Also acts as a regulator of hematopoietic stem cell differentiation by mediating degradation of hemoregulatory peptide N-acetyl-SDKP (AcSDKP). Acts as a regulator of cannabinoid signaling pathway by mediating degradation of hemopressin, an antagonist peptide of the cannabinoid receptor CNR1. Involved in amyloid-beta metabolism by catalyzing degradation of Amyloid-beta protein 40 and Amyloid-beta protein 42 peptides, thereby preventing plaque formation. Catalyzes cleavage of cholecystokinin (maturation of Cholecystokinin-8 and Cholecystokinin-5) and Gonadoliberin-1 (both maturation and degradation) hormones. Degradation of hemoregulatory peptide N-acetyl-SDKP (AcSDKP) and amyloid-beta proteins is mediated by the N-terminal catalytic domain, while angiotensin I and cholecystokinin cleavage is mediated by the C-terminal catalytic region. Its function is as follows. Soluble form that is released in blood plasma and other body fluids following proteolytic cleavage in the juxtamembrane stalk region. In terms of biological role, isoform produced by alternative promoter usage that is specifically expressed in spermatocytes and adult testis, and which is required for male fertility. In contrast to somatic isoforms, only contains one catalytic domain. Acts as a dipeptidyl carboxypeptidase that removes dipeptides from the C-terminus of substrates. The identity of substrates that are needed for male fertility is unknown. May also have a glycosidase activity which releases GPI-anchored proteins from the membrane by cleaving the mannose linkage in the GPI moiety. The GPIase activity was reported to be essential for the egg-binding ability of the sperm. This activity is however unclear and has been challenged by other groups, suggesting that it may be indirect. In Rattus norvegicus (Rat), this protein is Angiotensin-converting enzyme.